Consider the following 105-residue polypeptide: Small ribosomal subunit protein uS10 (105 aa).

It belongs to the universal ribosomal protein uS10 family. As to quaternary structure, part of the 30S ribosomal subunit.

In terms of biological role, involved in the binding of tRNA to the ribosomes. The chain is Small ribosomal subunit protein uS10 from Acidobacterium capsulatum (strain ATCC 51196 / DSM 11244 / BCRC 80197 / JCM 7670 / NBRC 15755 / NCIMB 13165 / 161).